A 363-amino-acid chain; its full sequence is Anhydro-N-acetylmuramic acid kinase (363 aa).

10-17 (GTSLDGLD) provides a ligand contact to ATP.

Belongs to the anhydro-N-acetylmuramic acid kinase family.

It carries out the reaction 1,6-anhydro-N-acetyl-beta-muramate + ATP + H2O = N-acetyl-D-muramate 6-phosphate + ADP + H(+). Its pathway is amino-sugar metabolism; 1,6-anhydro-N-acetylmuramate degradation. The protein operates within cell wall biogenesis; peptidoglycan recycling. In terms of biological role, catalyzes the specific phosphorylation of 1,6-anhydro-N-acetylmuramic acid (anhMurNAc) with the simultaneous cleavage of the 1,6-anhydro ring, generating MurNAc-6-P. Is required for the utilization of anhMurNAc either imported from the medium or derived from its own cell wall murein, and thus plays a role in cell wall recycling. The polypeptide is Anhydro-N-acetylmuramic acid kinase (Pseudomonas fluorescens (strain Pf0-1)).